A 359-amino-acid chain; its full sequence is Fe-S cluster assembly protein DRE2 (359 aa).

The N-terminal SAM-like domain stretch occupies residues 1–159 (MANILLLLHP…LFKKLSSNSN (159 aa)). Residues 152-187 (KKLSSNSNNNNNSSSPIGLTDSSAANTDEETDEANV) are disordered. The segment covering 155-166 (SSNSNNNNNSSS) has biased composition (low complexity). Residues 159–228 (NNNNNSSSPI…DDLIKDSNQL (70 aa)) are linker. Residues 167–177 (PIGLTDSSAAN) show a composition bias toward polar residues. Cysteine 240, cysteine 252, cysteine 255, and cysteine 257 together coordinate [2Fe-2S] cluster. Positions 240 to 257 (CEIPNGKKRRKACKDCTC) are fe-S binding site A. [4Fe-4S] cluster-binding residues include cysteine 322, cysteine 325, cysteine 333, and cysteine 336. 2 consecutive short sequence motifs (cx2C motif) follow at residues 322–325 (CGSC) and 333–336 (CDGC). Residues 322-336 (CGSCALGDAFRCDGC) form a fe-S binding site B region.

This sequence belongs to the anamorsin family. As to quaternary structure, monomer. Interacts with TAH18. Interacts with MIA40. [2Fe-2S] cluster serves as cofactor. The cofactor is [4Fe-4S] cluster.

It is found in the cytoplasm. Its subcellular location is the mitochondrion intermembrane space. Functionally, component of the cytosolic iron-sulfur (Fe-S) protein assembly (CIA) machinery required for the maturation of extramitochondrial Fe-S proteins. Part of an electron transfer chain functioning in an early step of cytosolic Fe-S biogenesis, facilitating the de novo assembly of a [4Fe-4S] cluster on the scaffold complex CFD1-NBP35. Electrons are transferred to DRE2 from NADPH via the FAD- and FMN-containing protein TAH18. TAH18-DRE2 are also required for the assembly of the diferric tyrosyl radical cofactor of ribonucleotide reductase (RNR), probably by providing electrons for reduction during radical cofactor maturation in the catalytic small subunit RNR2. The protein is Fe-S cluster assembly protein DRE2 of Scheffersomyces stipitis (strain ATCC 58785 / CBS 6054 / NBRC 10063 / NRRL Y-11545) (Yeast).